The chain runs to 358 residues: DNA polymerase IV (358 aa).

The UmuC domain occupies 4 to 185 (IIHVDMDCFY…LPLIKIPGVG (182 aa)). Mg(2+) contacts are provided by D8 and D103. Residue E104 is part of the active site.

Belongs to the DNA polymerase type-Y family. As to quaternary structure, monomer. It depends on Mg(2+) as a cofactor.

The protein resides in the cytoplasm. The enzyme catalyses DNA(n) + a 2'-deoxyribonucleoside 5'-triphosphate = DNA(n+1) + diphosphate. Functionally, poorly processive, error-prone DNA polymerase involved in untargeted mutagenesis. Copies undamaged DNA at stalled replication forks, which arise in vivo from mismatched or misaligned primer ends. These misaligned primers can be extended by PolIV. Exhibits no 3'-5' exonuclease (proofreading) activity. May be involved in translesional synthesis, in conjunction with the beta clamp from PolIII. The sequence is that of DNA polymerase IV from Shewanella pealeana (strain ATCC 700345 / ANG-SQ1).